Consider the following 588-residue polypeptide: Catechol oxidase B, chloroplastic (588 aa).

A chloroplast-targeting transit peptide spans 1 to 88; it reads SSSSTTTIPL…AANLAPLASA (88 aa). Disulfide bonds link Cys99-Cys115 and Cys114-Cys181. Cu cation-binding residues include His180, His198, His207, His329, His333, and His364. Positions 184 to 198 form a cross-link, 2'-(S-cysteinyl)-histidine (Cys-His); it reads CNGAYKVGGKELQVH.

This sequence belongs to the tyrosinase family. Cu(2+) serves as cofactor.

The protein localises to the plastid. Its subcellular location is the chloroplast thylakoid lumen. The catalysed reaction is 2 catechol + O2 = 2 1,2-benzoquinone + 2 H2O. Its function is as follows. Catalyzes the oxidation of mono- and o-diphenols to o-diquinones. This chain is Catechol oxidase B, chloroplastic, found in Solanum tuberosum (Potato).